Here is a 543-residue protein sequence, read N- to C-terminus: CTP synthase (543 aa).

The amidoligase domain stretch occupies residues Met1 to Ile265. Ser13 is a binding site for CTP. Ser13 contacts UTP. Ser14–Leu19 contributes to the ATP binding site. Tyr54 contacts L-glutamine. Position 71 (Asp71) interacts with ATP. Mg(2+) contacts are provided by Asp71 and Glu139. CTP contacts are provided by residues Asp146–Glu148, Lys186–Gln191, and Lys222. Residues Lys186 to Gln191 and Lys222 contribute to the UTP site. Residue Arg238 to Ala240 participates in ATP binding. The 252-residue stretch at Thr291–Leu542 folds into the Glutamine amidotransferase type-1 domain. Gly353 is an L-glutamine binding site. Residue Cys380 is the Nucleophile; for glutamine hydrolysis of the active site. Residues Phe381–Gln384, Glu404, and Arg470 contribute to the L-glutamine site. Catalysis depends on residues His515 and Glu517.

It belongs to the CTP synthase family. Homotetramer.

It carries out the reaction UTP + L-glutamine + ATP + H2O = CTP + L-glutamate + ADP + phosphate + 2 H(+). It catalyses the reaction L-glutamine + H2O = L-glutamate + NH4(+). The enzyme catalyses UTP + NH4(+) + ATP = CTP + ADP + phosphate + 2 H(+). It functions in the pathway pyrimidine metabolism; CTP biosynthesis via de novo pathway; CTP from UDP: step 2/2. Its activity is regulated as follows. Allosterically activated by GTP, when glutamine is the substrate; GTP has no effect on the reaction when ammonia is the substrate. The allosteric effector GTP functions by stabilizing the protein conformation that binds the tetrahedral intermediate(s) formed during glutamine hydrolysis. Inhibited by the product CTP, via allosteric rather than competitive inhibition. Its function is as follows. Catalyzes the ATP-dependent amination of UTP to CTP with either L-glutamine or ammonia as the source of nitrogen. Regulates intracellular CTP levels through interactions with the four ribonucleotide triphosphates. The polypeptide is CTP synthase (Rhodopseudomonas palustris (strain ATCC BAA-98 / CGA009)).